Here is a 387-residue protein sequence, read N- to C-terminus: Queuine tRNA-ribosyltransferase (387 aa).

Asp-93 (proton acceptor) is an active-site residue. Substrate-binding positions include Asp-93 to Phe-97, Asp-147, Gln-190, and Gly-217. The segment at Gly-248 to Asp-254 is RNA binding. Catalysis depends on Asp-267, which acts as the Nucleophile. The RNA binding; important for wobble base 34 recognition stretch occupies residues Thr-272–Arg-276. Positions 305, 307, 310, and 336 each coordinate Zn(2+).

The protein belongs to the queuine tRNA-ribosyltransferase family. As to quaternary structure, homodimer. Within each dimer, one monomer is responsible for RNA recognition and catalysis, while the other monomer binds to the replacement base PreQ1. Requires Zn(2+) as cofactor.

The enzyme catalyses 7-aminomethyl-7-carbaguanine + guanosine(34) in tRNA = 7-aminomethyl-7-carbaguanosine(34) in tRNA + guanine. Its pathway is tRNA modification; tRNA-queuosine biosynthesis. Catalyzes the base-exchange of a guanine (G) residue with the queuine precursor 7-aminomethyl-7-deazaguanine (PreQ1) at position 34 (anticodon wobble position) in tRNAs with GU(N) anticodons (tRNA-Asp, -Asn, -His and -Tyr). Catalysis occurs through a double-displacement mechanism. The nucleophile active site attacks the C1' of nucleotide 34 to detach the guanine base from the RNA, forming a covalent enzyme-RNA intermediate. The proton acceptor active site deprotonates the incoming PreQ1, allowing a nucleophilic attack on the C1' of the ribose to form the product. After dissociation, two additional enzymatic reactions on the tRNA convert PreQ1 to queuine (Q), resulting in the hypermodified nucleoside queuosine (7-(((4,5-cis-dihydroxy-2-cyclopenten-1-yl)amino)methyl)-7-deazaguanosine). This Gluconacetobacter diazotrophicus (strain ATCC 49037 / DSM 5601 / CCUG 37298 / CIP 103539 / LMG 7603 / PAl5) protein is Queuine tRNA-ribosyltransferase.